Consider the following 453-residue polypeptide: Bifunctional protein GlmU (453 aa).

The tract at residues 1-227 (MTQLSVVILA…LMEVEGANNR (227 aa)) is pyrophosphorylase. UDP-N-acetyl-alpha-D-glucosamine is bound by residues 9–12 (LAAG), K23, Q74, 79–80 (GT), 101–103 (YGD), G138, E152, N167, and N225. Mg(2+) is bound at residue D103. N225 is a Mg(2+) binding site. Residues 228–248 (LQLAALERYYQKIQAEKLLLA) form a linker region. The segment at 249–453 (GVTIIDPARF…IQGWQRPTKK (205 aa)) is N-acetyltransferase. 2 residues coordinate UDP-N-acetyl-alpha-D-glucosamine: R331 and K349. H361 acts as the Proton acceptor in catalysis. The UDP-N-acetyl-alpha-D-glucosamine site is built by Y364 and N375. Acetyl-CoA is bound by residues A378, 384 to 385 (NY), S403, A421, and R438.

The protein in the N-terminal section; belongs to the N-acetylglucosamine-1-phosphate uridyltransferase family. In the C-terminal section; belongs to the transferase hexapeptide repeat family. In terms of assembly, homotrimer. It depends on Mg(2+) as a cofactor.

The protein resides in the cytoplasm. It catalyses the reaction alpha-D-glucosamine 1-phosphate + acetyl-CoA = N-acetyl-alpha-D-glucosamine 1-phosphate + CoA + H(+). It carries out the reaction N-acetyl-alpha-D-glucosamine 1-phosphate + UTP + H(+) = UDP-N-acetyl-alpha-D-glucosamine + diphosphate. It participates in nucleotide-sugar biosynthesis; UDP-N-acetyl-alpha-D-glucosamine biosynthesis; N-acetyl-alpha-D-glucosamine 1-phosphate from alpha-D-glucosamine 6-phosphate (route II): step 2/2. Its pathway is nucleotide-sugar biosynthesis; UDP-N-acetyl-alpha-D-glucosamine biosynthesis; UDP-N-acetyl-alpha-D-glucosamine from N-acetyl-alpha-D-glucosamine 1-phosphate: step 1/1. The protein operates within bacterial outer membrane biogenesis; LPS lipid A biosynthesis. In terms of biological role, catalyzes the last two sequential reactions in the de novo biosynthetic pathway for UDP-N-acetylglucosamine (UDP-GlcNAc). The C-terminal domain catalyzes the transfer of acetyl group from acetyl coenzyme A to glucosamine-1-phosphate (GlcN-1-P) to produce N-acetylglucosamine-1-phosphate (GlcNAc-1-P), which is converted into UDP-GlcNAc by the transfer of uridine 5-monophosphate (from uridine 5-triphosphate), a reaction catalyzed by the N-terminal domain. The protein is Bifunctional protein GlmU of Glaesserella parasuis serovar 5 (strain SH0165) (Haemophilus parasuis).